Reading from the N-terminus, the 374-residue chain is Putative F-box/kelch-repeat protein At4g39756 (374 aa).

Positions 17–63 constitute an F-box domain; that stretch reads CPSFLSLPEEILVNCLARIPKSYYPKLSLVCKSFCSLILSMELYVER. Kelch repeat units lie at residues 135-180, 181-227, 231-278, and 280-308; these read ELYA…VING, KIYV…GMAV, KIYV…RQSC, and WYDTKHKEWRDIKGLATLNRRRRSSILEV.

This Arabidopsis thaliana (Mouse-ear cress) protein is Putative F-box/kelch-repeat protein At4g39756.